Reading from the N-terminus, the 157-residue chain is 2-C-methyl-D-erythritol 2,4-cyclodiphosphate synthase (157 aa).

Residues D8 and H10 each coordinate a divalent metal cation. 4-CDP-2-C-methyl-D-erythritol 2-phosphate is bound by residues 8 to 10 and 34 to 35; these read DVH and HS. H42 contacts a divalent metal cation. Residues 56–58, 61–65, 100–106, 132–135, F139, and R142 contribute to the 4-CDP-2-C-methyl-D-erythritol 2-phosphate site; these read DIG, FPDTD, AQAPKMA, and TTTE.

Belongs to the IspF family. In terms of assembly, homotrimer. A divalent metal cation is required as a cofactor.

The enzyme catalyses 4-CDP-2-C-methyl-D-erythritol 2-phosphate = 2-C-methyl-D-erythritol 2,4-cyclic diphosphate + CMP. It participates in isoprenoid biosynthesis; isopentenyl diphosphate biosynthesis via DXP pathway; isopentenyl diphosphate from 1-deoxy-D-xylulose 5-phosphate: step 4/6. Functionally, involved in the biosynthesis of isopentenyl diphosphate (IPP) and dimethylallyl diphosphate (DMAPP), two major building blocks of isoprenoid compounds. Catalyzes the conversion of 4-diphosphocytidyl-2-C-methyl-D-erythritol 2-phosphate (CDP-ME2P) to 2-C-methyl-D-erythritol 2,4-cyclodiphosphate (ME-CPP) with a corresponding release of cytidine 5-monophosphate (CMP). This Pseudomonas putida (strain GB-1) protein is 2-C-methyl-D-erythritol 2,4-cyclodiphosphate synthase.